Reading from the N-terminus, the 216-residue chain is ATP-dependent dethiobiotin synthetase BioD (216 aa).

N12 to F17 lines the ATP pocket. Residue T16 coordinates Mg(2+). Residue K36 is part of the active site. Position 40 (S40) interacts with substrate. ATP is bound by residues D53, E110 to G113, and N170 to Q171. Residues D53 and E110 each contribute to the Mg(2+) site.

It belongs to the dethiobiotin synthetase family. In terms of assembly, homodimer. The cofactor is Mg(2+).

Its subcellular location is the cytoplasm. The catalysed reaction is (7R,8S)-7,8-diammoniononanoate + CO2 + ATP = (4R,5S)-dethiobiotin + ADP + phosphate + 3 H(+). It functions in the pathway cofactor biosynthesis; biotin biosynthesis; biotin from 7,8-diaminononanoate: step 1/2. Its function is as follows. Catalyzes a mechanistically unusual reaction, the ATP-dependent insertion of CO2 between the N7 and N8 nitrogen atoms of 7,8-diaminopelargonic acid (DAPA, also called 7,8-diammoniononanoate) to form a ureido ring. This is ATP-dependent dethiobiotin synthetase BioD from Vesicomyosocius okutanii subsp. Calyptogena okutanii (strain HA).